Here is a 69-residue protein sequence, read N- to C-terminus: ATP synthase F(0) complex subunit 8 (69 aa).

Residues 8-24 traverse the membrane as a helical segment; it reads TWLLTITLMILALFCIY. K55 is subject to N6-acetyllysine; alternate. Residue K55 is modified to N6-succinyllysine; alternate. N6-acetyllysine is present on K58.

The protein belongs to the ATPase protein 8 family. In terms of assembly, component of the ATP synthase complex composed at least of ATP5F1A/subunit alpha, ATP5F1B/subunit beta, ATP5MC1/subunit c (homooctomer), MT-ATP6/subunit a, MT-ATP8/subunit 8, ATP5ME/subunit e, ATP5MF/subunit f, ATP5MG/subunit g, ATP5MK/subunit k, ATP5MJ/subunit j, ATP5F1C/subunit gamma, ATP5F1D/subunit delta, ATP5F1E/subunit epsilon, ATP5PF/subunit F6, ATP5PB/subunit b, ATP5PD/subunit d, ATP5PO/subunit OSCP. ATP synthase complex consists of a soluble F(1) head domain (subunits alpha(3) and beta(3)) - the catalytic core - and a membrane F(0) domain - the membrane proton channel (subunits c, a, 8, e, f, g, k and j). These two domains are linked by a central stalk (subunits gamma, delta, and epsilon) rotating inside the F1 region and a stationary peripheral stalk (subunits F6, b, d, and OSCP). Interacts with PRICKLE3.

Its subcellular location is the mitochondrion membrane. Its function is as follows. Subunit 8, of the mitochondrial membrane ATP synthase complex (F(1)F(0) ATP synthase or Complex V) that produces ATP from ADP in the presence of a proton gradient across the membrane which is generated by electron transport complexes of the respiratory chain. ATP synthase complex consist of a soluble F(1) head domain - the catalytic core - and a membrane F(1) domain - the membrane proton channel. These two domains are linked by a central stalk rotating inside the F(1) region and a stationary peripheral stalk. During catalysis, ATP synthesis in the catalytic domain of F(1) is coupled via a rotary mechanism of the central stalk subunits to proton translocation. In vivo, can only synthesize ATP although its ATP hydrolase activity can be activated artificially in vitro. Part of the complex F(0) domain. The protein is ATP synthase F(0) complex subunit 8 of Osphranter robustus (Wallaroo).